We begin with the raw amino-acid sequence, 711 residues long: MAVYRLCVTTGSYLKAGTLDNIYATLVGTCGESPKQKLDRVGRDFATGSVQKYKVRCASELGEILLLRLHKERFAFFCKDPWYCSRICVTTPDGSVVHFPCYQWIDGYCTVELRPGTARTICQDALPLLLDHRKRELQARQECYRWKIYAPGFPRMVDVSSFEEMESDKKFALTKTAPCADQDDNSGNRYLPGFPMKVDIPSLLHMEPNIRYSATKTASLIFNALPASLGMKIRGLLDRKGSWKRLDDIRNIFWCHKTFTSEYVTEHWCEDSFFGYQYLNGVNPIMLHCLSSLPSKLPVTNDMVAPLLGPGTCLQTELERGHIFLADYWILAEAPVHCLNGRQQYVTAPLCLLWLNPQGVLLPLAIQLSQIPGPESPIFLPTDCELDWLLAKTWVRNSEFLVHENNTHFLCTHLLCEAFSMATLRQLPLCHPVYKLLLPHTRYTLQVNTIARATLLNPDGLVDKVTSIGRRGLIYLMSTGLAHFTYTDFCLPDSLRARGVLTIPNYHYRDDGLKIWAAIERFVSEIVSYYYPNDACVQQDSELQAWVGEIFAQAFLGRESSGFPSRLCTPGELVKYLTAIIFNCSAQHAAVNSGQHDFGAWMPNAPSSMRQPPPQTKGNTTMESYLETLPEVNTTCSNLLLFWLVSQEPKDQRPLGTYPDEHFTEEAPRQSIAAFQKCLAQISKDIRARNESLALPYAYLDPPLIENSVSI.

In terms of domain architecture, PLAT spans 2 to 119; that stretch reads AVYRLCVTTG…TVELRPGTAR (118 aa). The Lipoxygenase domain maps to 119–711; it reads RTICQDALPL…PPLIENSVSI (593 aa). The Fe cation site is built by His-408, His-413, His-588, Asn-592, and Ile-711.

The protein belongs to the lipoxygenase family. The cofactor is Fe cation.

Its subcellular location is the cytoplasm. The enzyme catalyses a hydroperoxyeicosatetraenoate = a hydroxy-epoxy-eicosatetraenoate. It catalyses the reaction a hydroperoxyeicosatetraenoate = an oxoeicosatetraenoate + H2O. The catalysed reaction is (12R)-hydroperoxy-(5Z,8Z,10E,14Z)-eicosatetraenoate = (8R)-hydroxy-(11R,12R)-epoxy-(5Z,9E,14Z)-eicosatrienoate. It carries out the reaction (12S)-hydroperoxy-(5Z,8Z,10E,14Z)-eicosatetraenoate = (8R)-hydroxy-(11S,12S)-epoxy-(5Z,9E,14Z)-eicosatrienoate. The enzyme catalyses (12S)-hydroperoxy-(5Z,8Z,10E,14Z)-eicosatetraenoate = (10R)-hydroxy-(11S,12S)-epoxy-(5Z,8Z,14Z)-eicosatrienoate. It catalyses the reaction (15S)-hydroperoxy-(5Z,8Z,11Z,13E)-eicosatetraenoate = (13R)-hydroxy-(14S,15S)-epoxy-(5Z,8Z,11Z)-eicosatrienoate. The catalysed reaction is (5S)-hydroperoxy-(6E,8Z,11Z,14Z)-eicosatetraenoate = 7R-hydroxy-5S,6S-epoxy-(8Z,11Z,14Z)-eicosatrienoate. It carries out the reaction (13S)-hydroperoxy-(9Z,11E)-octadecadienoate = 11-hydroxy-(12S,13S)-epoxy-(9Z)-octadecenoate. The enzyme catalyses N-[omega-(9R)-hydroperoxy-(10E,12Z)-octadecadienoyloxy]acyl-beta-D-glucosyl-(1&lt;-&gt;1)-octadecasphing-4E-enine = a N-[omega-(9R,10R)-epoxy-(13R)-hydroxy-(11E)-octadecenoyloxy]acyl-beta-D-glucosyl-(1&lt;-&gt;1)-sphing-4E-enine. It catalyses the reaction a N-[omega-(9R)-hydroperoxy-(10E,12Z)-octadecadienoyloxy]-acylsphin-4E-enine = a N-[omega-(9R,10R)-epoxy-(13R)-hydroxy-(11E)-octadecenoyloxy]-acylsphing-4E-enine. The catalysed reaction is (12R)-hydroperoxy-(5Z,8Z,10E,14Z)-eicosatetraenoate = 12-oxo-(5Z,8Z,10E,14Z)-eicosatetraenoate + H2O. It carries out the reaction (12S)-hydroperoxy-(5Z,8Z,10E,14Z)-eicosatetraenoate = 12-oxo-(5Z,8Z,10E,14Z)-eicosatetraenoate + H2O. The enzyme catalyses (15S)-hydroperoxy-(5Z,8Z,11Z,13E)-eicosatetraenoate = 15-oxo-(5Z,8Z,11Z,13E)-eicosatetraenoate + H2O. It catalyses the reaction (13S)-hydroperoxy-(9Z,11E)-octadecadienoate = 13-oxo-(9Z,11E)-octadecadienoate + H2O. The catalysed reaction is (8S)-hydroperoxy-(5Z,9E,11Z,14Z)-eicosatetraenoate = (10R)-hydroxy-(8S,9S)-epoxy-(5Z,11Z,14Z)-eicosatrienoate. It carries out the reaction (8R)-hydroperoxy-(5Z,9E,11Z,14Z)-eicosatetraenoate = 8-oxo-(5Z,9E,11Z,14Z)-eicosatetraenoate + H2O. The enzyme catalyses (8S)-hydroperoxy-(5Z,9E,11Z,14Z)-eicosatetraenoate = 8-oxo-(5Z,9E,11Z,14Z)-eicosatetraenoate + H2O. Its pathway is lipid metabolism; hydroperoxy eicosatetraenoic acid biosynthesis. It participates in lipid metabolism; sphingolipid metabolism. Non-heme iron-containing lipoxygenase which is atypical in that it displays a prominent hydroperoxide isomerase activity and a reduced lipoxygenases activity. The hydroperoxide isomerase activity catalyzes the isomerization of hydroperoxides, derived from arachidonic and linoleic acid by ALOX12B, into hepoxilin-type epoxyalcohols and ketones. In presence of oxygen, oxygenates polyunsaturated fatty acids, including arachidonic acid, to produce fatty acid hydroperoxides. In the skin, acts downstream of ALOX12B on the linoleate moiety of esterified omega-hydroxyacyl-sphingosine (EOS) ceramides to produce an epoxy-ketone derivative, a crucial step in the conjugation of omega-hydroxyceramide to membrane proteins. Therefore plays a crucial role in the synthesis of corneocytes lipid envelope and the establishment of the skin barrier to water loss. In parallel, it may have a signaling function in barrier formation through the production of hepoxilins metabolites. Also plays a role in adipocyte differentiation through hepoxilin A3 and hepoxilin B3 production which in turn activate PPARG. Through the production of hepoxilins in the spinal cord, it may regulate inflammatory tactile allodynia. This Rattus norvegicus (Rat) protein is Hydroperoxide isomerase ALOXE3.